The chain runs to 377 residues: Leukocyte elastase inhibitor (377 aa).

Met-1 bears the N-acetylmethionine mark.

This sequence belongs to the serpin family. Ov-serpin subfamily.

It localises to the cytoplasm. Functionally, regulates the activity of the neutrophil proteases. This is Leukocyte elastase inhibitor (serpinb1) from Xenopus laevis (African clawed frog).